The chain runs to 61 residues: Probradykinin-1 (61 aa).

The first 22 residues, 1–22 (MSFLKKSLFLVLFLGLVSFSIC), serve as a signal peptide directing secretion. The propeptide occupies 23-48 (EEEKRETEEEENKDETEEQSEEKKRF). A disordered region spans residues 24-61 (EEKRETEEEENKDETEEQSEEKKRFEPVPPGFTPFRLT). A compositionally biased stretch (acidic residues) spans 30-42 (EEEENKDETEEQS).

Belongs to the frog skin active peptide (FSAP) family. Bradykinin-related peptide subfamily. Expressed by the skin glands.

The protein resides in the secreted. May produce in vitro relaxation of rat arterial smooth muscle and constriction of intestinal smooth muscle. May target bradykinin receptors (BDKRB). This Pithecopus azureus (Orange-legged monkey tree frog) protein is Probradykinin-1.